Here is a 317-residue protein sequence, read N- to C-terminus: Melanocyte-stimulating hormone receptor (317 aa).

Residues 1 to 37 (MPMQEPQRRLLGPFNSTRTGAPHLELSANQTGPWCLH) are Extracellular-facing. Asparagine 15 and asparagine 29 each carry an N-linked (GlcNAc...) asparagine glycan. The helical transmembrane segment at 38–63 (VSIPDGLFLSLGLVSLVENVLVVISI) threads the bilayer. The Cytoplasmic portion of the chain corresponds to 64–72 (AKNQNLHSP). A helical transmembrane segment spans residues 73-93 (MYYFICCLALSDLLVSVSIVL). Residues 94–118 (ETTLILVLEAGALATRVTVVQQLDN) lie on the Extracellular side of the membrane. The chain crosses the membrane as a helical span at residues 119–140 (VIDVLICASMVSSLCFLGAIAV). At 141–163 (DRYISIFYALRYHSIVTLPRARW) the chain is on the cytoplasmic side. A helical membrane pass occupies residues 164 to 183 (AIVAIWVASISSSTLFVAYY). Over 184-191 (NHTAVLLC) the chain is Extracellular. Residues 192–211 (LVTFFLATLALMVVLYVHML) form a helical membrane-spanning segment. Topologically, residues 212–240 (ARAHQHAQAIAQLHKRQHLVHQGFRLKGA) are cytoplasmic. A helical transmembrane segment spans residues 241 to 266 (ATLTILLGIFFLCWGPFFLYLTLIVL). Topologically, residues 267-279 (CPKHPTCGCFFKN) are extracellular. Residues 280–300 (LNLFLALIIFNSIVDPLIYAF) traverse the membrane as a helical segment. Residues 301–317 (RSQELRMTLKEVLLCSW) are Cytoplasmic-facing. Cysteine 315 carries the S-palmitoyl cysteine lipid modification.

This sequence belongs to the G-protein coupled receptor 1 family. In terms of assembly, interacts with MGRN1, but does not undergo MGRN1-mediated ubiquitination; this interaction competes with GNAS-binding and thus inhibits agonist-induced cAMP production. Interacts with OPN3; the interaction results in a decrease in MC1R-mediated cAMP signaling and ultimately a decrease in melanin production in melanocytes.

Its subcellular location is the cell membrane. Its function is as follows. Receptor for MSH (alpha, beta and gamma) and ACTH. The activity of this receptor is mediated by G proteins which activate adenylate cyclase. Mediates melanogenesis, the production of eumelanin (black/brown) and phaeomelanin (red/yellow), via regulation of cAMP signaling in melanocytes. The polypeptide is Melanocyte-stimulating hormone receptor (MC1R) (Chaetodipus penicillatus (Desert pocket mouse)).